The primary structure comprises 517 residues: Zinc finger protein AEBP2 (517 aa).

Residues 1 to 229 (MAAAITDMAD…DSEDSISSTI (229 aa)) are disordered. Ala-2 bears the N-acetylalanine mark. Phosphoserine is present on residues Ser-18 and Ser-24. The span at 36 to 51 (PEEEEEEEEEEEEAEA) shows a compositional bias: acidic residues. A compositionally biased stretch (gly residues) spans 61–78 (GGSGGGGGGGGGGVGGGE). A compositionally biased stretch (acidic residues) spans 94-121 (GEDEDEEEDDEEEEDESSSSGGGEEESS). Low complexity predominate over residues 122–150 (AESLVGSSGGSSSDETRSLSPGAASSSSG). At Ser-141 the chain carries Phosphoserine. Residues 152–163 (GDGKEGLEEPKG) are compositionally biased toward basic and acidic residues. 2 stretches are compositionally biased toward gly residues: residues 166–175 (GSQGGGGGGS) and 185–196 (GDEGYGTGGGGS). Phosphoserine occurs at positions 206, 210, and 211. Residues 209 to 294 (MSSDGEPLSR…IHVDGQRGGV (86 aa)) form an interaction with RBBP4 region. Residues 261 to 286 (YNCCWDQCQACFNSSPDLADHIRSIH) form a C2H2-type 1 zinc finger. The C2H2-type 2; degenerate zinc-finger motif lies at 300–322 (KGCKVYNTPSTSQSWLQRHMLTH). The segment at 328 to 352 (FKCVVGGCNASFASQGGLARHVPTH) adopts a C2H2-type 3 zinc-finger fold. Polar residues predominate over residues 352-365 (HFSQQNSSKVSSQP). A disordered region spans residues 352-394 (HFSQQNSSKVSSQPKAKEESPSKAGMNKRRKLKNKRRRSLPRP). The span at 377–392 (MNKRRKLKNKRRRSLP) shows a compositional bias: basic residues. Residue Ser-390 is modified to Phosphoserine. The interaction with SUZ12 stretch occupies residues 407–478 (RHRAICFNLS…QLKTKVVHLS (72 aa)). The segment at 495 to 517 (TMPQKRLKRTLIRKVFNLYLSKQ) is important for nucleosome binding activity of the PRC2 complex.

This sequence belongs to the AEBP2/jing C2H2-type zinc-finger family. Self-associates. Associates with the PRC2 complex, which consists of the core components EED, EZH1 or EZH2, SUZ12, and RBBP4, and various combinations of accessory subunits including AEBP2, JARID2, PHF19, MTF2 and EPOP. Found in a monomeric PRC2.2 (class 2) complex consisting of at least SUZ12, RBBP4, AEBP2 and JARID2. Within the PRC2 complex, interacts directly with SUZ12; competes with PHF19 for SUZ12 binding. Interacts with EED, EZH2, and RBBP4. May also interact with RBBP7.

The protein localises to the nucleus. In terms of biological role, acts as an accessory subunit for the core Polycomb repressive complex 2 (PRC2), which mediates histone H3K27 (H3K27me3) trimethylation on chromatin leading to transcriptional repression of the affected target gene. Plays a role in nucleosome localization of the PRC2 complex. The chain is Zinc finger protein AEBP2 (AEBP2) from Homo sapiens (Human).